Consider the following 122-residue polypeptide: Holo-[acyl-carrier-protein] synthase (122 aa).

Mg(2+) contacts are provided by aspartate 8 and glutamate 56.

The protein belongs to the P-Pant transferase superfamily. AcpS family. Mg(2+) serves as cofactor.

It localises to the cytoplasm. The catalysed reaction is apo-[ACP] + CoA = holo-[ACP] + adenosine 3',5'-bisphosphate + H(+). In terms of biological role, transfers the 4'-phosphopantetheine moiety from coenzyme A to a Ser of acyl-carrier-protein. The protein is Holo-[acyl-carrier-protein] synthase of Streptomyces griseus subsp. griseus (strain JCM 4626 / CBS 651.72 / NBRC 13350 / KCC S-0626 / ISP 5235).